The following is a 557-amino-acid chain: Nicotinate phosphoribosyltransferase 2 (557 aa).

Positions 31 and 219 each coordinate nicotinate. At His222 the chain carries Phosphohistidine. Residue Arg329 participates in nicotinate binding. 5-phospho-alpha-D-ribose 1-diphosphate is bound at residue Thr391.

Belongs to the NAPRTase family. Mg(2+) is required as a cofactor. Requires Mn(2+) as cofactor. Transiently phosphorylated on a His residue during the reaction cycle. Phosphorylation strongly increases the affinity for substrates and increases the rate of nicotinate D-ribonucleotide production. Dephosphorylation regenerates the low-affinity form of the enzyme, leading to product release.

The enzyme catalyses nicotinate + 5-phospho-alpha-D-ribose 1-diphosphate + ATP + H2O = nicotinate beta-D-ribonucleotide + ADP + phosphate + diphosphate. Its pathway is cofactor biosynthesis; NAD(+) biosynthesis; nicotinate D-ribonucleotide from nicotinate: step 1/1. Functionally, catalyzes the first step in the biosynthesis of NAD from nicotinic acid, the ATP-dependent synthesis of beta-nicotinate D-ribonucleotide from nicotinate and 5-phospho-D-ribose 1-phosphate. Helps prevent cellular oxidative stress via its role in NAD biosynthesis. This chain is Nicotinate phosphoribosyltransferase 2, found in Arabidopsis thaliana (Mouse-ear cress).